The chain runs to 868 residues: Translation initiation factor IF-2 (868 aa).

The disordered stretch occupies residues 201–269 (KEEVKPEKVS…GTEKSDKYRE (69 aa)). The segment covering 249–260 (RGGRSKFKKKKG) has biased composition (basic residues). Residues 368-537 (GRAPVVTIMG…LLQSEVLELK (170 aa)) enclose the tr-type G domain. The G1 stretch occupies residues 377 to 384 (GHVDHGKT). 377–384 (GHVDHGKT) provides a ligand contact to GTP. The G2 stretch occupies residues 402–406 (GITQH). Positions 423–426 (DTPG) are G3. Residues 423–427 (DTPGH) and 477–480 (NKMD) each bind GTP. The interval 477–480 (NKMD) is G4. Residues 513 to 515 (SAK) are G5.

Belongs to the TRAFAC class translation factor GTPase superfamily. Classic translation factor GTPase family. IF-2 subfamily.

It is found in the cytoplasm. Its function is as follows. One of the essential components for the initiation of protein synthesis. Protects formylmethionyl-tRNA from spontaneous hydrolysis and promotes its binding to the 30S ribosomal subunits. Also involved in the hydrolysis of GTP during the formation of the 70S ribosomal complex. The protein is Translation initiation factor IF-2 of Legionella pneumophila (strain Corby).